The chain runs to 254 residues: Vitamin B12 import ATP-binding protein BtuD (254 aa).

The ABC transporter domain maps to 3–239; it reads INYISVGNRL…ENLQQVFETP (237 aa). Residue 29 to 36 participates in ATP binding; that stretch reads GPNGSGKS.

Belongs to the ABC transporter superfamily. Vitamin B12 importer (TC 3.A.1.13.1) family. As to quaternary structure, the complex is composed of two ATP-binding proteins (BtuD), two transmembrane proteins (BtuC) and a solute-binding protein (BtuF).

It is found in the cell inner membrane. The enzyme catalyses an R-cob(III)alamin(out) + ATP + H2O = an R-cob(III)alamin(in) + ADP + phosphate + H(+). Part of the ABC transporter complex BtuCDF involved in vitamin B12 import. Responsible for energy coupling to the transport system. The sequence is that of Vitamin B12 import ATP-binding protein BtuD from Vibrio vulnificus (strain CMCP6).